Reading from the N-terminus, the 67-residue chain is DNA-directed RNA polymerase subunit omega (67 aa).

The protein belongs to the RNA polymerase subunit omega family. As to quaternary structure, the RNAP catalytic core consists of 2 alpha, 1 beta, 1 beta' and 1 omega subunit. When a sigma factor is associated with the core the holoenzyme is formed, which can initiate transcription.

The enzyme catalyses RNA(n) + a ribonucleoside 5'-triphosphate = RNA(n+1) + diphosphate. Promotes RNA polymerase assembly. Latches the N- and C-terminal regions of the beta' subunit thereby facilitating its interaction with the beta and alpha subunits. The polypeptide is DNA-directed RNA polymerase subunit omega (Listeria monocytogenes serotype 4a (strain HCC23)).